Reading from the N-terminus, the 665-residue chain is PR5-like receptor kinase (665 aa).

The signal sequence occupies residues 1-24 (MVEGFSLSLMFLLVSHFFVSGVMS). The Extracellular segment spans residues 25-276 (RNFTIENKCD…TKQKSSWKLK (252 aa)). Residues asparagine 26 and asparagine 88 are each glycosylated (N-linked (GlcNAc...) asparagine). Disulfide bonds link cysteine 33/cysteine 249, cysteine 81/cysteine 91, cysteine 96/cysteine 103, cysteine 153/cysteine 238, cysteine 158/cysteine 221, cysteine 166/cysteine 184, cysteine 188/cysteine 197, and cysteine 198/cysteine 208. Asparagine 163 carries an N-linked (GlcNAc...) asparagine glycan. Asparagine 233 is a glycosylation site (N-linked (GlcNAc...) asparagine). A helical membrane pass occupies residues 277–297 (LIVGVSAALTLMILIVVVIIV). Over 298 to 665 (RTKNMRNSEW…DVLQHGSRSS (368 aa)) the chain is Cytoplasmic. In terms of domain architecture, Protein kinase spans 331–620 (NSFAHVLGKG…ALQVPPNPLL (290 aa)). ATP contacts are provided by residues 337–345 (LGKGGFGTV) and lysine 360. The active-site Proton acceptor is the aspartate 455.

It in the N-terminal section; belongs to the thaumatin family. The protein in the C-terminal section; belongs to the protein kinase superfamily. Ser/Thr protein kinase family. In terms of processing, autophosphorylated in vitro. Expressed in roots. Expressed at low levels in stems.

The protein resides in the membrane. The catalysed reaction is L-seryl-[protein] + ATP = O-phospho-L-seryl-[protein] + ADP + H(+). It catalyses the reaction L-threonyl-[protein] + ATP = O-phospho-L-threonyl-[protein] + ADP + H(+). Possesses kinase activity in vitro. This chain is PR5-like receptor kinase, found in Arabidopsis thaliana (Mouse-ear cress).